The chain runs to 135 residues: Fluoride-specific ion channel FluC 2 (135 aa).

A run of 4 helical transmembrane segments spans residues 5–25, 36–56, 68–88, and 100–120; these read VLAA…GLLA, WGTV…METL, PFLG…ITDA, and ALLA…AAAG. Na(+)-binding residues include G76 and T79.

The protein belongs to the fluoride channel Fluc/FEX (TC 1.A.43) family.

It localises to the cell membrane. The catalysed reaction is fluoride(in) = fluoride(out). Na(+) is not transported, but it plays an essential structural role and its presence is essential for fluoride channel function. Functionally, fluoride-specific ion channel. Important for reducing fluoride concentration in the cell, thus reducing its toxicity. In Thermobifida fusca (strain YX), this protein is Fluoride-specific ion channel FluC 2.